We begin with the raw amino-acid sequence, 582 residues long: Leucine-rich repeat protein SHOC-2 (582 aa).

Composition is skewed to basic and acidic residues over residues 1–29 (MSSSLGKEKDSKEKDPKVPSAKEREKEAK) and 36–57 (KESKEKEPKTKGKDAKDGKKDS). A disordered region spans residues 1–88 (MSSSLGKEKD…PGTRKKSSNA (88 aa)). Residues 63 to 66 (GVAF) carry the RVxF motif; important for interaction with PP1c motif. LRR repeat units lie at residues 101-122 (NSMRLDLSKRSIHILPSSIKEL), 124-145 (QLTELYLYSNKLQSLPAEVGCL), 147-169 (NLMTLALSENSLTSLPDSLDNLK), 170-191 (KLRMLDLRHNKLREIPSVVYRL), 193-214 (SLTTLYLRFNRITTVEKDIKNL), 216-237 (KLSMLSIRENKIKQLPAEIGEL), 239-260 (NLITLDVAHNQLEHLPKEIGNC), 262-283 (QITNLDLQHNELLDLPDTIGNL), 285-307 (SLSRLGLRYNRLSAIPRSLAKCS), 308-329 (ALEELNLENNNISTLPESLLSS), 332-353 (KLNSLTLARNCFQLYPVGGPSQ), 356-377 (TIYSLNMEHNRINKIPFGIFSR), 380-400 (VLSKLNMKDNQLTSLPLDFGT), 403-424 (SMVELNLATNQLTKIPEDVSGL), 426-448 (SLEVLILSNNLLKKLPHGLGNLR), 449-470 (KLRELDLEENKLESLPNEIAYL), 472-494 (DLQKLVLTNNQLTTLPRGIGHLT), 495-516 (NLTHLGLGENLLTHLPEEIGTL), 518-540 (NLEELYLNDNPNLHSLPFELALC), and 542-563 (KLSIMSIENCPLSHLPPQIVAG).

This sequence belongs to the SHOC2 family. In terms of assembly, component of the SHOC2-MRAS-PP1c (SMP) complex consisting of SHOC2, GTP-bound M-Ras/MRAS and the catalytic subunit of protein phosphatase 1 (either PPP1CA, PPP1CB or PPP1CC). SHOC2 and PP1c preferably bind M-Ras/MRAS, but they also bind K-Ras/KRAS, N-Ras/NRAS and H-Ras/HRAS; these interactions are GTP-dependent and both SHOC2 and PP1c are required to form a stable complex. Interacts with PP1c in the absence of Ras GTPases. Interacts with M-Ras/MRAS and RAF1. Interacts with ERBIN; disrupts the interaction with RAF1 and Ras, preventing the activation of the Ras signaling pathway. Interacts with LZTR1.

The protein resides in the cytoplasm. The protein localises to the nucleus. Its function is as follows. Core component of the SHOC2-MRAS-PP1c (SMP) holophosphatase complex that regulates activation of the MAPK pathway. Acts as a scaffolding protein in the SMP complex. The SMP complex specifically dephosphorylates the inhibitory phosphorylation at 'Ser-259' of RAF1 kinase, 'Ser-365' of BRAF kinase and 'Ser-214' of ARAF kinase, stimulating their kinase activities. The SMP complex enhances the dephosphorylation activity and substrate specificity of PP1c. The polypeptide is Leucine-rich repeat protein SHOC-2 (SHOC2) (Homo sapiens (Human)).